The primary structure comprises 154 residues: Ribosomal RNA large subunit methyltransferase H (154 aa).

Residue G102 coordinates S-adenosyl-L-methionine.

It belongs to the RNA methyltransferase RlmH family. As to quaternary structure, homodimer.

The protein resides in the cytoplasm. It catalyses the reaction pseudouridine(1915) in 23S rRNA + S-adenosyl-L-methionine = N(3)-methylpseudouridine(1915) in 23S rRNA + S-adenosyl-L-homocysteine + H(+). Functionally, specifically methylates the pseudouridine at position 1915 (m3Psi1915) in 23S rRNA. The chain is Ribosomal RNA large subunit methyltransferase H from Caulobacter sp. (strain K31).